A 271-amino-acid polypeptide reads, in one-letter code: MTDLKTIIEEAYQNKDNFTTDTVPKKIHQAIHQTIELLDNGELRIAEKQNGQWNTNEWAKMAILLYFKTEPLKTFDAGYTFFYDKIPLKYTNNTSQPQSGVRVVPHAIVRKGAYLAPNTVLMPSYINIGAYVDSGTLIDTWATVGSCAQIGKNVHLSGGAGIGGVLEPLQAHPTIIEDDCFIGARSEIVEGVMVEKGSVISMGVFVGQSTPIYNRQTQEITYGRIPAGSVVIPGSLPSKDGHYNRYSAIIVKQVDKKTRSKVSLNELLREG.

Residues Arg-102 and Asp-139 each coordinate substrate.

The protein belongs to the transferase hexapeptide repeat family. As to quaternary structure, homotrimer.

It localises to the cytoplasm. It carries out the reaction (S)-2,3,4,5-tetrahydrodipicolinate + succinyl-CoA + H2O = (S)-2-succinylamino-6-oxoheptanedioate + CoA. Its pathway is amino-acid biosynthesis; L-lysine biosynthesis via DAP pathway; LL-2,6-diaminopimelate from (S)-tetrahydrodipicolinate (succinylase route): step 1/3. This chain is 2,3,4,5-tetrahydropyridine-2,6-dicarboxylate N-succinyltransferase, found in Coxiella burnetii (strain RSA 331 / Henzerling II).